Consider the following 480-residue polypeptide: MANVQSRYNHLFPSPAAAFSGMYTGGLWTNNLGSWPGKANQTVEFSNGTKMTVETTASVMLDRGLDFSSGESLFQTACMPNKKSRPPDPRPSLAVGKPPYSIPLGGPSMYPDPIIHHKKDFVRGYYLHEERLEDVAVLQLPTFRLIGESPVSLARVAVQFLERARKDGKEKLIIDLSNNMGGDINLGFNLFRILFPDKPIYTATRFPSTELIGLMGRVFSTSQGNEAVEHDNTLDLPLVFQNAVTPDHRHSFGSWEKLFGPVEIAGQNMSHLHATYNFTTASTEDNPISGYGGIEFGPSTQLFHAENIIIMTNGICASTCTILARLLKQQGVRSIVFGGRPRAAPMQLLGGSKGGQYWSLVTISHYIKKAREIAVNASGAGSPILSEDELARFLELAPPPLTGFPIRIDSRGGSGVNFRNEYDEKDPTTPLQFVYEAADCRLFWTAENYVFPESSWVAAADAMFGDASCVEESDGHHITP.

The disordered stretch occupies residues 78-97; the sequence is CMPNKKSRPPDPRPSLAVGK. The tract at residues 134-336 is peptidase S41 domain; it reads DVAVLQLPTF…LKQQGVRSIV (203 aa).

It belongs to the peptidase S41A family.

It functions in the pathway mycotoxin biosynthesis. Its function is as follows. Peptidase S41 family protein; part of the gene cluster that mediates the biosynthesis of the secondary metabolite ustiloxin B, an antimitotic tetrapeptide. First, ustA is processed by the subtilisin-like endoprotease Kex2 that is outside the ustiloxin B gene cluster, at the C-terminal side of Arg-Lys, after transfer to Golgi apparatus through the endoplasmic reticulum (ER). Cleavage by KEX2 generates 16 peptides YAIG-I to YAIG-XVI. To process the precursor peptide further, at least two peptidases are necessary to cleave the N-terminal and C-terminal sides of the Tyr-Ala-Ile-Gly core peptide which serves as backbone for the synthesis of ustiloxin B, through cyclization and modification of the tyrosine with a non-protein coding amino acid, norvaline. One of the two peptidases must be the serine peptidase ustP; and the other pepdidase is probably ustH. Macrocyclization of the core peptide derived from ustA requires the tyrosinase ustQ, as well as the homologous oxidases ustYa and ustYb, and leads to the production of the first cyclization product N-desmethylustiloxin F. For the formation of N-desmethylustiloxin F, three oxidation steps are required, hydroxylation at the benzylic position, hydroxylation at either the aromatic ring of Tyr or beta-position of Ile, and oxidative cyclization. UstQ may catalyze the oxidation of a phenol moiety, whereas the ustYa and ustYb are most likely responsible for the remaining two-step oxidations. N-desmethylustiloxin F is then methylated by ustM to yield ustiloxin F which in turn substrate of the cytochrome P450 monooxygenase ustC which catalyzes the formation of S-deoxyustiloxin H. The flavoprotein monooxygenases ustF1 and ustF2 then participate in the modification of the side chain of S-deoxyustiloxin H, leading to the synthesis of an oxime intermediate, via ustiloxin H. Finally, carboxylative dehydration performed by the cysteine desulfurase-like protein ustD yields ustiloxin B. The protein is Peptidase S41 family protein ustP of Aspergillus flavus (strain ATCC 200026 / FGSC A1120 / IAM 13836 / NRRL 3357 / JCM 12722 / SRRC 167).